A 298-amino-acid chain; its full sequence is Quinolinate synthase (298 aa).

Residues H19 and S36 each contribute to the iminosuccinate site. C81 is a binding site for [4Fe-4S] cluster. Iminosuccinate-binding positions include 107 to 109 (YVN) and S124. C168 contacts [4Fe-4S] cluster. Iminosuccinate is bound by residues 193-195 (HPE) and T210. Residue C254 coordinates [4Fe-4S] cluster.

This sequence belongs to the quinolinate synthase family. Type 2 subfamily. [4Fe-4S] cluster serves as cofactor.

Its subcellular location is the cytoplasm. The catalysed reaction is iminosuccinate + dihydroxyacetone phosphate = quinolinate + phosphate + 2 H2O + H(+). The protein operates within cofactor biosynthesis; NAD(+) biosynthesis; quinolinate from iminoaspartate: step 1/1. Catalyzes the condensation of iminoaspartate with dihydroxyacetone phosphate to form quinolinate. The chain is Quinolinate synthase from Thermotoga sp. (strain RQ2).